The chain runs to 178 residues: Inorganic pyrophosphatase (178 aa).

The substrate site is built by K30, R44, and Y56. The Mg(2+) site is built by D66, D71, and D103. Y140 serves as a coordination point for substrate.

This sequence belongs to the PPase family. As to quaternary structure, homohexamer. Mg(2+) is required as a cofactor.

The protein resides in the cytoplasm. The enzyme catalyses diphosphate + H2O = 2 phosphate + H(+). Its function is as follows. Catalyzes the hydrolysis of inorganic pyrophosphate (PPi) forming two phosphate ions. The chain is Inorganic pyrophosphatase from Thermococcus kodakarensis (strain ATCC BAA-918 / JCM 12380 / KOD1) (Pyrococcus kodakaraensis (strain KOD1)).